A 154-amino-acid chain; its full sequence is Large-conductance mechanosensitive channel (154 aa).

3 helical membrane-spanning segments follow: residues 14-34, 38-58, and 81-101; these read VMDL…VTSL, IITP…LFIN, and GLFL…FIVI.

Belongs to the MscL family. As to quaternary structure, homopentamer.

Its subcellular location is the cell membrane. Channel that opens in response to stretch forces in the membrane lipid bilayer. May participate in the regulation of osmotic pressure changes within the cell. The polypeptide is Large-conductance mechanosensitive channel (Brevibacillus brevis (strain 47 / JCM 6285 / NBRC 100599)).